A 607-amino-acid chain; its full sequence is Cytosolic Fe-S cluster assembly factor nar1 (607 aa).

Position 20 (C20) interacts with [4Fe-4S] cluster. The segment at P28–V47 is disordered. Residues K29–E40 are compositionally biased toward polar residues. 5 residues coordinate [4Fe-4S] cluster: C62, C65, C68, C214, and C269. The disordered stretch occupies residues A439–A461. Over residues Q452–A461 the composition is skewed to polar residues. The [4Fe-4S] cluster site is built by C475 and C479. Polar residues predominate over residues A494 to E505. Residues A494 to H513 form a disordered region.

The protein belongs to the NARF family.

Its function is as follows. Component of the cytosolic Fe/S protein assembly machinery. Required for maturation of extramitochondrial Fe/S proteins. May play a role in the transfer of pre-assembled Fe/S clusters to target apoproteins. This Aspergillus oryzae (strain ATCC 42149 / RIB 40) (Yellow koji mold) protein is Cytosolic Fe-S cluster assembly factor nar1 (nar1).